Reading from the N-terminus, the 612-residue chain is DNA damage checkpoint protein 1 (612 aa).

Ser436 is modified (phosphoserine). The interval 576 to 612 (GLLNSQNDTSNHKKQDNKEMEDGLGLTQVEKPRGIFD) is disordered. The segment covering 585–596 (SNHKKQDNKEME) has biased composition (basic and acidic residues).

This sequence belongs to the DDC1 family. In terms of assembly, component of the checkpoint clamp complex composed of DDC1, MEC3 and RAD17. The interaction with MEC3 is performed in a RAD17-dependent manner. The checkpoint clamp complex loads onto DNA in an ATP-dependent manner through its interaction with the RFC-RAD4 checkpoint clamp loader complex. Interacts with the DNA polymerase zeta subunit REV7 and DPB11. In terms of processing, phosphorylated during cell cycle S-phase and in response to DNA damage. This phosphorylation is MEC14 dependent. Also hosphorylated by CDC28.

It localises to the cytoplasm. It is found in the nucleus. Its function is as follows. Component of the checkpoint clamp complex involved in the surveillance mechanism that allows the DNA repair pathways to act to restore the integrity of the DNA prior to DNA synthesis or separation of the replicated chromosomes. Associates with sites of DNA damage and modulates the MEC1 signaling pathway and the activation of RAD53 in response to DNA damage at phase G1. The complex also physically regulates DNA polymerase zeta-dependent mutagenesis by controlling the access of polymerase zeta to damaged DNA. This chain is DNA damage checkpoint protein 1 (DDC1), found in Saccharomyces cerevisiae (strain ATCC 204508 / S288c) (Baker's yeast).